Consider the following 486-residue polypeptide: Glycogen synthase (486 aa).

Lysine 15 is a binding site for ADP-alpha-D-glucose.

The protein belongs to the glycosyltransferase 1 family. Bacterial/plant glycogen synthase subfamily.

It carries out the reaction [(1-&gt;4)-alpha-D-glucosyl](n) + ADP-alpha-D-glucose = [(1-&gt;4)-alpha-D-glucosyl](n+1) + ADP + H(+). Its pathway is glycan biosynthesis; glycogen biosynthesis. Functionally, synthesizes alpha-1,4-glucan chains using ADP-glucose. The chain is Glycogen synthase from Thermotoga maritima (strain ATCC 43589 / DSM 3109 / JCM 10099 / NBRC 100826 / MSB8).